The chain runs to 1644 residues: Terminal uridylyltransferase 4 (1644 aa).

3 disordered regions span residues N31–I63, C96–L168, and A205–Y257. Residues A36–E46 show a composition bias toward basic and acidic residues. Residue S104 is modified to Phosphoserine. Residues T112 to Q125 show a composition bias toward polar residues. S134 and S156 each carry phosphoserine. Over residues L206–T222 the composition is skewed to polar residues. The span at D238–S252 shows a compositional bias: basic and acidic residues. The required for interaction with LIN28A and pre-let-7 RNA stretch occupies residues S253–L333. 4 residues coordinate Zn(2+): C306, C309, H322, and H328. The disordered stretch occupies residues E579–S617. Residues S582 to T603 are compositionally biased toward basic and acidic residues. The PAP-associated 1 domain occupies S628–S678. The segment at G794 to Q816 is disordered. Basic and acidic residues predominate over residues S806–Q816. Residues D901–C1634 form a sufficient for monouridylation activity region. Residues I913–E930 form a CCHC-type 1 zinc finger. UTP is bound by residues S998–N1001, S1008–D1011, N1081, K1103, S1121–I1125, and H1237. The Mg(2+) site is built by D1009 and D1011. The region spanning S1184 to H1237 is the PAP-associated 2 domain. A CCHC-type 2 zinc finger spans residues R1293–K1310. Residues K1321–T1348 are disordered. Basic and acidic residues predominate over residues K1334–T1348. The CCHC-type 3 zinc-finger motif lies at L1357–E1374. Positions A1401 to Y1426 are enriched in low complexity. A disordered region spans residues A1401 to A1482. Residues A1441–S1452 are compositionally biased toward polar residues. Positions Q1453–Q1470 are enriched in low complexity. Position 1624 is an omega-N-methylarginine (R1624).

The protein belongs to the DNA polymerase type-B-like family. As to quaternary structure, interacts with LIN28A in the presence of pre-let-7 RNA. Interacts with T2BP. Interacts with MOV10; the interaction is RNA-dependent. The cofactor is Mg(2+). It depends on Mn(2+) as a cofactor.

The protein localises to the nucleus. It is found in the cytoplasm. The protein resides in the cytoplasmic ribonucleoprotein granule. The enzyme catalyses RNA(n) + UTP = RNA(n)-3'-uridine ribonucleotide + diphosphate. Functionally, uridylyltransferase that mediates the terminal uridylation of mRNAs with short (less than 25 nucleotides) poly(A) tails, hence facilitating global mRNA decay. Essential for both oocyte maturation and fertility. Through 3' terminal uridylation of mRNA, sculpts, with TUT7, the maternal transcriptome by eliminating transcripts during oocyte growth. Involved in microRNA (miRNA)-induced gene silencing through uridylation of deadenylated miRNA targets. Also functions as an integral regulator of microRNA biogenesis using 3 different uridylation mechanisms. Acts as a suppressor of miRNA biogenesis by mediating the terminal uridylation of some miRNA precursors, including that of let-7 (pre-let-7), miR107, miR-143 and miR-200c. Uridylated miRNAs are not processed by Dicer and undergo degradation. Degradation of pre-let-7 contributes to the maintenance of embryonic stem (ES) cell pluripotency. Also catalyzes the 3' uridylation of miR-26A, a miRNA that targets IL6 transcript. This abrogates the silencing of IL6 transcript, hence promoting cytokine expression. In the absence of LIN28A, TUT7 and TUT4 monouridylate group II pre-miRNAs, which includes most of pre-let7 members, that shapes an optimal 3' end overhang for efficient processing. Adds oligo-U tails to truncated pre-miRNAS with a 5' overhang which may promote rapid degradation of non-functional pre-miRNA species. May also suppress Toll-like receptor-induced NF-kappa-B activation via binding to T2BP. Does not play a role in replication-dependent histone mRNA degradation. Due to functional redundancy between TUT4 and TUT7, the identification of the specific role of each of these proteins is difficult. TUT4 and TUT7 restrict retrotransposition of long interspersed element-1 (LINE-1) in cooperation with MOV10 counteracting the RNA chaperonne activity of L1RE1. TUT7 uridylates LINE-1 mRNAs in the cytoplasm which inhibits initiation of reverse transcription once in the nucleus, whereas uridylation by TUT4 destabilizes mRNAs in cytoplasmic ribonucleoprotein granules. The protein is Terminal uridylyltransferase 4 of Homo sapiens (Human).